The following is a 430-amino-acid chain: Histidinol dehydrogenase (430 aa).

Residues tyrosine 129, glutamine 190, and asparagine 213 each coordinate NAD(+). Residues serine 236, glutamine 258, and histidine 261 each contribute to the substrate site. Zn(2+) contacts are provided by glutamine 258 and histidine 261. Active-site proton acceptor residues include glutamate 326 and histidine 327. Residues histidine 327, aspartate 360, glutamate 414, and histidine 419 each coordinate substrate. Aspartate 360 contacts Zn(2+). Residue histidine 419 coordinates Zn(2+).

The protein belongs to the histidinol dehydrogenase family. It depends on Zn(2+) as a cofactor.

It catalyses the reaction L-histidinol + 2 NAD(+) + H2O = L-histidine + 2 NADH + 3 H(+). Its pathway is amino-acid biosynthesis; L-histidine biosynthesis; L-histidine from 5-phospho-alpha-D-ribose 1-diphosphate: step 9/9. Catalyzes the sequential NAD-dependent oxidations of L-histidinol to L-histidinaldehyde and then to L-histidine. The protein is Histidinol dehydrogenase of Caldanaerobacter subterraneus subsp. tengcongensis (strain DSM 15242 / JCM 11007 / NBRC 100824 / MB4) (Thermoanaerobacter tengcongensis).